The sequence spans 401 residues: Chromate transport protein (401 aa).

Transmembrane regions (helical) follow at residues 26–46 (LVMY…ALAG), 67–87 (GLAL…IYLG), 93–113 (IVGA…MVLA), 124–144 (LTWM…IIAI), 172–192 (VITE…VWFW), 214–234 (AASG…GVFF), 237–257 (AGAF…GGVV), 272–294 (VAVA…YLVA), 299–321 (ACVA…APYF), 330–350 (ILAF…GAVI), 356–376 (SIVD…LLKF), and 379–399 (LSEP…YPLL).

It belongs to the chromate ion transporter (CHR) (TC 2.A.51) family.

Its subcellular location is the cell inner membrane. In terms of biological role, this protein reduces chromate accumulation and is essential for chromate resistance. The sequence is that of Chromate transport protein from Cupriavidus metallidurans (strain ATCC 43123 / DSM 2839 / NBRC 102507 / CH34) (Ralstonia metallidurans).